We begin with the raw amino-acid sequence, 188 residues long: Ribosome-recycling factor (188 aa).

This sequence belongs to the RRF family.

Its subcellular location is the cytoplasm. Its function is as follows. Responsible for the release of ribosomes from messenger RNA at the termination of protein biosynthesis. May increase the efficiency of translation by recycling ribosomes from one round of translation to another. This is Ribosome-recycling factor from Blochmanniella floridana.